Here is a 92-residue protein sequence, read N- to C-terminus: Small ribosomal subunit protein uS19c (92 aa).

It belongs to the universal ribosomal protein uS19 family.

It is found in the plastid. The protein resides in the chloroplast. In terms of biological role, protein S19 forms a complex with S13 that binds strongly to the 16S ribosomal RNA. The chain is Small ribosomal subunit protein uS19c from Coffea arabica (Arabian coffee).